Reading from the N-terminus, the 419-residue chain is CinA-like protein (419 aa).

This sequence belongs to the CinA family.

This chain is CinA-like protein, found in Synechococcus sp. (strain CC9902).